The following is a 661-amino-acid chain: Serine/threonine-protein phosphatase rdgC (661 aa).

In terms of domain architecture, IQ spans 7 to 32; the sequence is RAAIFIQKWYRRHQARREMQRRCNWQ. Positions 105-413 are catalytic; it reads IDLLIDVFRK…HFVQYISAAS (309 aa). Positions 158, 160, 187, and 219 each coordinate Mn(2+). The active-site Proton donor is His220. Positions 271 and 360 each coordinate Mn(2+). EF-hand domains follow at residues 441–476, 526–561, and 566–601; these read DHRD…VTKL, ANKA…LVAH, and YSKA…SDLH. Positions 539, 541, 543, 545, 550, 579, 581, 583, 585, and 590 each coordinate Ca(2+). Residues 606 to 625 are disordered; it reads QDENIRRRSTGRPSVAKTAT.

This sequence belongs to the PPP phosphatase family. Requires Mn(2+) as cofactor. Expressed in the visual system of the fly, as well as in the mushroom bodies of the central brain.

It carries out the reaction O-phospho-L-seryl-[protein] + H2O = L-seryl-[protein] + phosphate. The enzyme catalyses O-phospho-L-threonyl-[protein] + H2O = L-threonyl-[protein] + phosphate. Its function is as follows. Phosphatase required to prevent light-induced retinal degeneration. This Drosophila melanogaster (Fruit fly) protein is Serine/threonine-protein phosphatase rdgC (rdgC).